Reading from the N-terminus, the 213-residue chain is Thiopurine S-methyltransferase (213 aa).

Positions 10, 45, 66, and 120 each coordinate S-adenosyl-L-methionine.

This sequence belongs to the class I-like SAM-binding methyltransferase superfamily. TPMT family.

It localises to the cytoplasm. It carries out the reaction S-adenosyl-L-methionine + a thiopurine = S-adenosyl-L-homocysteine + a thiopurine S-methylether.. This is Thiopurine S-methyltransferase from Photobacterium profundum (strain SS9).